The primary structure comprises 134 residues: MTDEPIKEILGTPKSPKPVAMEKNANGEVVVTLVPLVSEIQLAAATGGAELSCYRCVIPFAVVVLITGTVVTAVAYSFNSHGSIISILGLVLLSLGLFLLASSALCWKVRQRSKKAKRRESQTTLVVNQRGWFA.

At Ser-15 the chain carries Phosphoserine. 2 helical membrane-spanning segments follow: residues 56 to 76 (CVIPFAVVVLITGTVVTAVAY) and 84 to 104 (IISILGLVLLSLGLFLLASSA). Ser-121 bears the Phosphoserine mark.

As to quaternary structure, interacts (via C-terminus) with TRPA1 and TRPV1. Interacts with TASOR.

Its subcellular location is the cell membrane. It localises to the membrane. The protein resides in the perikaryon. The protein localises to the cytoplasm. It is found in the perinuclear region. Its subcellular location is the endoplasmic reticulum. Its function is as follows. Plays a role during embryonic arterial endothelium differentiation and vascular morphogenesis through the ACVRL1 receptor-dependent signaling pathway upon stimulation by bone morphogenetic proteins, such as GDF2/BMP9 and BMP10. Involved in the regulation of nociception, acting as a modulator of the interaction between TRPA1 and TRPV1, two molecular sensors and mediators of pain signals in dorsal root ganglia (DRG) neurons. Mechanistically, it weakens their interaction, thereby releasing the inhibition of TRPA1 by TRPV1 and increasing the single-channel open probability of the TRPA1-TRPV1 complex. The chain is Transmembrane protein 100 (TMEM100) from Bos taurus (Bovine).